Here is a 310-residue protein sequence, read N- to C-terminus: Ribosomal RNA small subunit methyltransferase H (310 aa).

S-adenosyl-L-methionine contacts are provided by residues Gly32–His34, Asp52, Phe79, Asp100, and Gln107.

The protein belongs to the methyltransferase superfamily. RsmH family.

It is found in the cytoplasm. It carries out the reaction cytidine(1402) in 16S rRNA + S-adenosyl-L-methionine = N(4)-methylcytidine(1402) in 16S rRNA + S-adenosyl-L-homocysteine + H(+). Specifically methylates the N4 position of cytidine in position 1402 (C1402) of 16S rRNA. The chain is Ribosomal RNA small subunit methyltransferase H from Bacillus cytotoxicus (strain DSM 22905 / CIP 110041 / 391-98 / NVH 391-98).